A 309-amino-acid chain; its full sequence is Putative S-adenosyl-L-methionine-dependent methyltransferase Mvan_0104 (309 aa).

Residues aspartate 134 and 163–164 (DL) contribute to the S-adenosyl-L-methionine site.

Belongs to the UPF0677 family.

Functionally, exhibits S-adenosyl-L-methionine-dependent methyltransferase activity. The protein is Putative S-adenosyl-L-methionine-dependent methyltransferase Mvan_0104 of Mycolicibacterium vanbaalenii (strain DSM 7251 / JCM 13017 / BCRC 16820 / KCTC 9966 / NRRL B-24157 / PYR-1) (Mycobacterium vanbaalenii).